Reading from the N-terminus, the 228-residue chain is Large ribosomal subunit protein bL25 (228 aa).

Residues 1–10 (MNSLDANTRN) are compositionally biased toward polar residues. Disordered stretches follow at residues 1–20 (MNSLDANTRNTKSKGDVRSL) and 187–228 (MKEP…EEKK). Basic and acidic residues predominate over residues 202–228 (EDGKEAAPAAEGDKKDDGEKKATEEKK).

The protein belongs to the bacterial ribosomal protein bL25 family. CTC subfamily. In terms of assembly, part of the 50S ribosomal subunit; part of the 5S rRNA/L5/L18/L25 subcomplex. Contacts the 5S rRNA. Binds to the 5S rRNA independently of L5 and L18.

Its function is as follows. This is one of the proteins that binds to the 5S RNA in the ribosome where it forms part of the central protuberance. The polypeptide is Large ribosomal subunit protein bL25 (Pelagibacter ubique (strain HTCC1062)).